A 450-amino-acid polypeptide reads, in one-letter code: UDP-N-acetylmuramoylalanine--D-glutamate ligase (450 aa).

Residue 119-125 (GSNGKTT) participates in ATP binding.

It belongs to the MurCDEF family.

It is found in the cytoplasm. The enzyme catalyses UDP-N-acetyl-alpha-D-muramoyl-L-alanine + D-glutamate + ATP = UDP-N-acetyl-alpha-D-muramoyl-L-alanyl-D-glutamate + ADP + phosphate + H(+). It functions in the pathway cell wall biogenesis; peptidoglycan biosynthesis. Functionally, cell wall formation. Catalyzes the addition of glutamate to the nucleotide precursor UDP-N-acetylmuramoyl-L-alanine (UMA). This Streptococcus gordonii (strain Challis / ATCC 35105 / BCRC 15272 / CH1 / DL1 / V288) protein is UDP-N-acetylmuramoylalanine--D-glutamate ligase.